The chain runs to 517 residues: Xylosidase/arabinosidase (517 aa).

The active-site Proton acceptor is aspartate 15. The active-site Proton donor is the glutamate 185.

It belongs to the glycosyl hydrolase 43 family.

It catalyses the reaction Hydrolysis of (1-&gt;4)-beta-D-xylans, to remove successive D-xylose residues from the non-reducing termini.. The catalysed reaction is Hydrolysis of terminal non-reducing alpha-L-arabinofuranoside residues in alpha-L-arabinosides.. In terms of biological role, has a 1.6-fold higher activity as an arabinosidase than as a beta-xylosidase when tested on the substrates nitrophenyl-beta-D-xylopyranoside and P-nitrophenyl-alpha-L-arabinofuranoside. This Butyrivibrio fibrisolvens protein is Xylosidase/arabinosidase (xylB).